The sequence spans 299 residues: 33 kDa chaperonin (299 aa).

2 cysteine pairs are disulfide-bonded: Cys240–Cys242 and Cys273–Cys276.

This sequence belongs to the HSP33 family. Post-translationally, under oxidizing conditions two disulfide bonds are formed involving the reactive cysteines. Under reducing conditions zinc is bound to the reactive cysteines and the protein is inactive.

It is found in the cytoplasm. In terms of biological role, redox regulated molecular chaperone. Protects both thermally unfolding and oxidatively damaged proteins from irreversible aggregation. Plays an important role in the bacterial defense system toward oxidative stress. The sequence is that of 33 kDa chaperonin from Thermosynechococcus vestitus (strain NIES-2133 / IAM M-273 / BP-1).